Reading from the N-terminus, the 457-residue chain is 4-hydroxybenzoate transporter PcaK (457 aa).

The Cytoplasmic segment spans residues 1–34; it reads MPKEANMASQDYATQRSSLDAQALINDAPLSRYQ. Residues 35 to 55 form a helical membrane-spanning segment; it reads WLIAIVCFLIVFVDGIDTAAM. Over 56–72 the chain is Periplasmic; that stretch reads GFIAPALAQDWGVDRSQ. A helical transmembrane segment spans residues 73 to 93; it reads LGPVMSAALGGMIIGALVSGP. The Cytoplasmic segment spans residues 94–101; that stretch reads TADRFGRK. The chain crosses the membrane as a helical span at residues 102–122; that stretch reads IVLSMSMLVFGGFTLACAYST. At 123–128 the chain is on the periplasmic side; it reads NLDSLV. A helical transmembrane segment spans residues 129 to 149; it reads IFRFLTGIGLGAAMPNATTLF. Residues 150 to 168 are Cytoplasmic-facing; it reads SEYCPARIRSLLVTCMFCG. Residues 169–189 form a helical membrane-spanning segment; sequence YNLGMAIGGFISSWLIPAFGW. The Periplasmic segment spans residues 190–191; sequence HS. A helical membrane pass occupies residues 192–212; the sequence is LFLLGGWAPLILMLLVIFFLP. Over 213–274 the chain is Cytoplasmic; that stretch reads ESYRFLIVKG…LFSAKYVKGT (62 aa). Residues 275–295 form a helical membrane-spanning segment; that stretch reads VLLWVTYFMGLVMIYLLTSWL. The Periplasmic portion of the chain corresponds to 296-310; it reads PTLMRETGASLERAA. Residues 311-331 traverse the membrane as a helical segment; it reads FLGGLFQFGGVLSALFIGWAM. Residues 332-338 lie on the Cytoplasmic side of the membrane; that stretch reads DRFNPNR. A helical membrane pass occupies residues 339-359; that stretch reads IIAGFYLAAGIFAVIVGQSLS. The Periplasmic segment spans residues 360 to 363; the sequence is NPTL. Residues 364-384 traverse the membrane as a helical segment; that stretch reads LALFILCAGIAVNGAQSSMPV. Over 385–400 the chain is Cytoplasmic; that stretch reads LSARFYPTQCRATGVA. A helical membrane pass occupies residues 401–421; that stretch reads WMSGIGRFGAVFGAWIGAVLL. The Periplasmic segment spans residues 422–426; sequence GNNWS. Residues 427-447 form a helical membrane-spanning segment; that stretch reads FTMILSMLIIPAAAAAIAIFV. Topologically, residues 448–457 are cytoplasmic; sequence KSLVAHTDAT.

This sequence belongs to the major facilitator superfamily. Aromatic acid:H(+) symporter (AAHS) (TC 2.A.1.15) family. In terms of assembly, homotrimer.

The protein localises to the cell inner membrane. In terms of biological role, uptake of 4-hydroxybenzoate (4-HB). Can also transport a variety of aromatic acids with hydroxyl substitutions at the 2-, 3- and 4-positions, such as salicylate, 2,4-dihydroxybenzoate, protocatechuate, 3-hydroxybenzoate, vanillate and gentisate. The polypeptide is 4-hydroxybenzoate transporter PcaK (Acinetobacter baylyi (strain ATCC 33305 / BD413 / ADP1)).